Consider the following 1074-residue polypeptide: Telomerase reverse transcriptase (1074 aa).

Residues 240–265 (DKVSCETMQDGESGKTTLVQKQPGSK) form a disordered region. The span at 253–262 (GKTTLVQKQP) shows a compositional bias: polar residues. The TFLY; involved in RNA binding signature appears at 300 to 305 (TLGFLY). Interaction with RNA template stretches follow at residues 355 to 360 (LPRRFF) and 461 to 486 (WKIK…ELSY). The Reverse transcriptase domain occupies 552–877 (TPDQVAALPK…CLFPWCGLLL (326 aa)). Mg(2+) is bound by residues Asp649, Asp810, and Asp811.

The protein belongs to the reverse transcriptase family. Telomerase subfamily. As to quaternary structure, catalytic subunit of the telomerase holoenzyme complex composed minimally of TERT and the telomerase RNA template component (TERC). In terms of tissue distribution, detected at highest levels in gill, ovary and testis, and at lower levels in brain, eye, heart, skin, spleen and stomach.

The protein localises to the nucleus. It is found in the chromosome. Its subcellular location is the telomere. It carries out the reaction DNA(n) + a 2'-deoxyribonucleoside 5'-triphosphate = DNA(n+1) + diphosphate. In terms of biological role, telomerase is a ribonucleoprotein enzyme essential for the replication of chromosome termini in most eukaryotes. It elongates telomeres. It is a reverse transcriptase that adds simple sequence repeats to chromosome ends by copying a template sequence within the RNA component of the enzyme. The chain is Telomerase reverse transcriptase from Takifugu rubripes (Japanese pufferfish).